The chain runs to 202 residues: CASP-like protein 2B1 (202 aa).

Over 1–29 the chain is Cytoplasmic; it reads MSYLGVGVSPGNVPVYHGTNSKVIDRRVR. A helical membrane pass occupies residues 30–50; that stretch reads LAELVLRCVICCLGVLAAVLV. The Extracellular portion of the chain corresponds to 51–72; that stretch reads GTDTQVKEIFSIQKKARFTDMK. A helical transmembrane segment spans residues 73-93; that stretch reads ALVFLVAANGIAAAYSFVQGV. Residues 94 to 109 are Cytoplasmic-facing; that stretch reads RCVVGMVKGSVLFSKP. A helical membrane pass occupies residues 110-132; it reads LAWVIFSGDQMMAYLTMSAVAAA. The Extracellular portion of the chain corresponds to 133–164; the sequence is AQSSVFAKLGQPDLQWMKICTMYGKFCNQVGE. A helical transmembrane segment spans residues 165–185; that stretch reads GIASALLVSVSMVVLSCISAF. Topologically, residues 186–202 are cytoplasmic; the sequence is SLFRLYGGNKGKDGARW.

Belongs to the Casparian strip membrane proteins (CASP) family. In terms of assembly, homodimer and heterodimers.

The protein resides in the cell membrane. The chain is CASP-like protein 2B1 from Populus trichocarpa (Western balsam poplar).